We begin with the raw amino-acid sequence, 2176 residues long: Protein eyes shut (2176 aa).

The Cytoplasmic portion of the chain corresponds to 1-122; that stretch reads MSNVHQFDTQ…NPNILLPTLR (122 aa). Residues 123–143 form a helical membrane-spanning segment; it reads ILARGLLLPALILAILVGSSQ. The region spanning 144–180 is the EGF-like 1 domain; sequence AGFACLSNPCVFGVCIDGLNSSYSCYCIDGYTGIQCQ. The Extracellular portion of the chain corresponds to 144-2176; sequence AGFACLSNPC…DLHGDEPLTV (2033 aa). 21 disulfide bridges follow: C148–C158, C153–C168, C170–C179, C186–C197, C191–C206, C208–C217, C224–C235, C229–C244, C246–C255, C262–C276, C270–C286, C288–C297, C304–C315, C309–C324, C326–C335, C342–C353, C347–C362, C364–C373, C380–C392, C386–C401, and C403–C412. An N-linked (GlcNAc...) asparagine glycan is attached at N163. The 37-residue stretch at 182–218 folds into the EGF-like 2; calcium-binding domain; sequence NWDECWSSPCQNGGTCVDGVAYYNCTCPEGFSGSNCE. N205 is a glycosylation site (N-linked (GlcNAc...) asparagine). The region spanning 220 to 256 is the EGF-like 3; calcium-binding domain; it reads NVDECMSNPCQNGGLCRDRTNGYICTCQPGYLGSHCE. Residues 258-298 enclose the EGF-like 4 domain; sequence DVAVCETGTGARCQHGGECIEGPGLEFTCDCPAGWHGRICQ. Residues 300-336 form the EGF-like 5; calcium-binding domain; that stretch reads EINECASSPCQNGGVCVDKLAAYACACPMGYTGINCE. The region spanning 338–374 is the EGF-like 6 domain; that stretch reads EILICADNPCQNNALCLMEEGVPTCYCVPDYHGEKCE. An EGF-like 7; calcium-binding domain is found at 376–413; it reads QYDECQLGPRCMNGGVCIDGVDTFSCSCPPLLTGMLCE. N425 is a glycosylation site (N-linked (GlcNAc...) asparagine). Composition is skewed to low complexity over residues 429–447 and 482–502; these read PATQ…MAPP and VTSV…VSVE. 5 disordered regions span residues 429–465, 482–639, 757–783, 802–854, and 902–1014; these read PATQ…SRAS, VTSV…RPTA, RFTT…LPTP, LITT…VEIT, and APPA…GVPE. Over residues 514–526 the composition is skewed to polar residues; it reads GSHSISVEQTTAV. Residues 548 to 560 show a composition bias toward acidic residues; the sequence is SASESETETEEEI. Low complexity-rich tracts occupy residues 564 to 582 and 596 to 632; these read TTAR…ESPS and TSAS…SEEV. Polar residues predominate over residues 757-775; that stretch reads RFTTVQPPAGVTTTSPTED. Basic residues predominate over residues 811-820; that stretch reads THHHHHHHPH. Composition is skewed to pro residues over residues 904-922 and 930-955; these read PATP…PSPP and TLPP…PTPP. The EGF-like 8 domain maps to 1018 to 1054; it reads GDVDCIKLGCYNGGTCVTTSEGSRCVCRFDRQGPLCE. Intrachain disulfides connect C1022–C1033, C1027–C1042, and C1044–C1053. One can recognise a Laminin G-like 1 domain in the interval 1059–1266; sequence IRNAAFSGDS…GITECGSLAC (208 aa). N1165, N1170, and N1176 each carry an N-linked (GlcNAc...) asparagine glycan. The EGF-like 9 domain occupies 1309-1346; that stretch reads EISVCEDNPCQYGGTCVQFPGSGYLCLCPLGKHGHYCE. 3 cysteine pairs are disulfide-bonded: C1313/C1324, C1318/C1334, and C1336/C1345. A Laminin G-like 2 domain is found at 1353–1549; the sequence is LPSFSGSVNG…GVGQCGTREC (197 aa). An N-linked (GlcNAc...) asparagine glycan is attached at N1471. 2 consecutive EGF-like domains span residues 1545-1581 and 1583-1621; these read GTRE…PLCA and PTNP…KNCE. 6 disulfide bridges follow: C1549-C1560, C1554-C1569, C1571-C1580, C1587-C1600, C1594-C1609, and C1611-C1620. N1665 and N1861 each carry an N-linked (GlcNAc...) asparagine glycan. Residues 1692-1879 enclose the Laminin G-like 3 domain; sequence EKQRSFSPVP…NIRDCDGTAC (188 aa). EGF-like domains follow at residues 1875 to 1912 and 1913 to 1946; these read DGTA…DRCE and YSET…FYCE. Intrachain disulfides connect C1879/C1890, C1884/C1900, C1902/C1911, C1917/C1928, C1922/C1934, and C1936/C1945. The Laminin G-like 4 domain occupies 1952 to 2166; that stretch reads PTTPSFRGNS…TYQGENIGSC (215 aa). Residues N1994, N2035, and N2099 are each glycosylated (N-linked (GlcNAc...) asparagine). The segment at 2080–2101 is disordered; sequence GGRSLGSTTPRSTLAGRRKNSS.

It belongs to the EYS family. In terms of tissue distribution, expressed from the beginning of rhabdomere biogenesis (48 hours after pupal formation), when it decorates the entire photoreceptor apical surface.

Its subcellular location is the membrane. The protein localises to the secreted. Functionally, essential for the formation of matrix-filled interrhabdomeral space: critical for the formation of epithelial lumina in the retina. Acts together with prominin (prom) and the cell adhesion molecule chaoptin (chp) to choreograph the partitioning of rhabdomeres into an open system. This chain is Protein eyes shut, found in Drosophila melanogaster (Fruit fly).